A 442-amino-acid chain; its full sequence is Exodeoxyribonuclease 7 large subunit (442 aa).

The interval 1-38 (MSDSTQFSLFDSGDDEPAKVTAPKRKVARKKRSSSSSD) is disordered. The segment covering 22–33 (APKRKVARKKRS) has biased composition (basic residues).

This sequence belongs to the XseA family. In terms of assembly, heterooligomer composed of large and small subunits.

The protein localises to the cytoplasm. The enzyme catalyses Exonucleolytic cleavage in either 5'- to 3'- or 3'- to 5'-direction to yield nucleoside 5'-phosphates.. Bidirectionally degrades single-stranded DNA into large acid-insoluble oligonucleotides, which are then degraded further into small acid-soluble oligonucleotides. The chain is Exodeoxyribonuclease 7 large subunit from Rhodopirellula baltica (strain DSM 10527 / NCIMB 13988 / SH1).